The sequence spans 694 residues: Transcription activator of gluconeogenesis PTRG_06536 (694 aa).

Positions 1 to 57 (MTTPDAEDASPSPEYRSDQDDDMAAEQTTDRQSGDASPTQKPANGKPNAKDPLRPRR) are disordered. A DNA-binding region (zn(2)-C6 fungal-type) is located at residues 64 to 92 (CFACQRAHLTCGDERPCGRCIKRGLQDHC). Disordered regions lie at residues 175–216 (FSNQ…FGPL), 289–369 (AMAF…GDNP), 384–420 (AQRS…RDTK), and 539–569 (VNLG…SEGA). Positions 193–204 (SVQNAGAPSTMS) are enriched in polar residues. Residues 205 to 214 (QGQQGMQQFG) are compositionally biased toward low complexity. Over residues 302 to 324 (WQETQSRQGSMHVHTPNNTSGSG) the composition is skewed to polar residues. Residues 349–363 (ATHSTASPASTDAST) are compositionally biased toward low complexity. Over residues 392-408 (RPQQENRPPTTALQSIH) the composition is skewed to polar residues. Positions 485 to 559 (LQRHLMTLQE…SDTSTQNTTP (75 aa)) constitute a PAS domain.

The protein belongs to the ERT1/acuK family.

It is found in the nucleus. Transcription factor which regulates nonfermentable carbon utilization. Activator of gluconeogenetic genes. This Pyrenophora tritici-repentis (strain Pt-1C-BFP) (Wheat tan spot fungus) protein is Transcription activator of gluconeogenesis PTRG_06536.